The sequence spans 520 residues: Peptide chain release factor 3 (520 aa).

The tr-type G domain occupies 8 to 273; the sequence is EIRKTFAIIS…AYVDHAPMPS (266 aa). Residues 17-24, 85-89, and 139-142 each bind GTP; these read SHPDAGKT, DTPGH, and NKLD.

It belongs to the TRAFAC class translation factor GTPase superfamily. Classic translation factor GTPase family. PrfC subfamily.

It is found in the cytoplasm. Increases the formation of ribosomal termination complexes and stimulates activities of RF-1 and RF-2. It binds guanine nucleotides and has strong preference for UGA stop codons. It may interact directly with the ribosome. The stimulation of RF-1 and RF-2 is significantly reduced by GTP and GDP, but not by GMP. In Macrococcus caseolyticus (strain JCSC5402) (Macrococcoides caseolyticum), this protein is Peptide chain release factor 3.